Consider the following 396-residue polypeptide: dTDP-epi-vancosaminyltransferase (396 aa).

Residue 10-12 (SRG) participates in dTDP-beta-L-4-epi-vancosamine binding. Devancoaminyl-vancomycin-binding residues include Asp127, Gln133, Tyr141, and Tyr169. Residues Arg207, Ser230, 277–278 (EV), and 293–298 (HDSAGT) contribute to the dTDP-beta-L-4-epi-vancosamine site.

This sequence belongs to the glycosyltransferase 28 family.

It catalyses the reaction dTDP-beta-L-4-epi-vancosamine + devancoaminyl-vancomycin = chloroorienticin B + dTDP + H(+). The protein operates within antibiotic biosynthesis; vancomycin biosynthesis. In terms of biological role, catalyzes the attachment of 4-epi-vancosamine from a TDP donor to the beta-OH-Tyr-6 of the aglycone cosubstrate in the biosynthesis of glycopeptide antibiotic chloroeremomycin, a member of the vancomycin group of antibiotics. Strongly prefers devancoaminyl-vancomycin (DVV) as substrate rather than the heptapeptide vancomycin aglycone (AGV). Acts downstream of GtfB. The sequence is that of dTDP-epi-vancosaminyltransferase (gtfA) from Amycolatopsis orientalis (Nocardia orientalis).